Here is a 309-residue protein sequence, read N- to C-terminus: Porphobilinogen deaminase (309 aa).

At C240 the chain carries S-(dipyrrolylmethanemethyl)cysteine.

The protein belongs to the HMBS family. Monomer. The cofactor is dipyrromethane.

The enzyme catalyses 4 porphobilinogen + H2O = hydroxymethylbilane + 4 NH4(+). Its pathway is porphyrin-containing compound metabolism; protoporphyrin-IX biosynthesis; coproporphyrinogen-III from 5-aminolevulinate: step 2/4. Tetrapolymerization of the monopyrrole PBG into the hydroxymethylbilane pre-uroporphyrinogen in several discrete steps. The sequence is that of Porphobilinogen deaminase from Chromobacterium violaceum (strain ATCC 12472 / DSM 30191 / JCM 1249 / CCUG 213 / NBRC 12614 / NCIMB 9131 / NCTC 9757 / MK).